The primary structure comprises 575 residues: MNIQQLLSEKIRHAMIAAGAQQPAEPAVRQSGKPQFGDYQANGIMGAAKKLGLNPREFAQKVLDNLNLDGIAEKLEIAGPGFINIFLSKNWLVCHADEMLSAVNFGIKTAKPQTIVVDYSSPNVAKEMHVGHLRSTIIGDAVVRTLEFLGNHVIRANHVGDWGTQFGMLIAYLEKMENENASAMQLSDLEAFYRAAKEHYDNDEAFAEKARNYVVKLQSGDEYCRIMWKKLVDITMRHNQENYDRLNVTLTEKDVMGESLYNPMLPEIVADLKKQGLAVEDDGALVVYLDEFKNKDGDPMGVIVQKKDGGYLYTTTDIAAAKYRCHKLHADRVLVFSDSRQSQHMQQAWLITRKAGYVPDSFSLEHPFFGMMLGKDGKPFKTRTGGTVKLKDLLDEAVERADKLIAERNPDLTAEEKAAVVEAVAIGSVKYSDLSKNRTTDYVFDWDNMLTFEGNTAPYMQYAYTRIRSIFARAGIEPNSLNDDIVLTDDKERVLVIKLLQFEEALNGVAKDGMPHILCQYLYELAGMFSAFYEACPILNAERPIKNSRLKLAALAAKTLKQGLDLLGIKTVEKM.

The short motif at 122–132 (PNVAKEMHVGH) is the 'HIGH' region element.

This sequence belongs to the class-I aminoacyl-tRNA synthetase family. In terms of assembly, monomer.

It is found in the cytoplasm. It catalyses the reaction tRNA(Arg) + L-arginine + ATP = L-arginyl-tRNA(Arg) + AMP + diphosphate. The sequence is that of Arginine--tRNA ligase from Actinobacillus succinogenes (strain ATCC 55618 / DSM 22257 / CCUG 43843 / 130Z).